A 227-amino-acid chain; its full sequence is Ribonuclease 3 (227 aa).

The 130-residue stretch at 4–133 (FEELEKLLDY…LIAAIYLDSD (130 aa)) folds into the RNase III domain. Residue E46 coordinates Mg(2+). D50 is an active-site residue. Mg(2+)-binding residues include N119 and E122. E122 is an active-site residue. The 69-residue stretch at 158–226 (DPKTALQEWA…ARELLHKLKL (69 aa)) folds into the DRBM domain.

It belongs to the ribonuclease III family. In terms of assembly, homodimer. Requires Mg(2+) as cofactor.

The protein localises to the cytoplasm. The catalysed reaction is Endonucleolytic cleavage to 5'-phosphomonoester.. In terms of biological role, digests double-stranded RNA. Involved in the processing of primary rRNA transcript to yield the immediate precursors to the large and small rRNAs (23S and 16S). Processes some mRNAs, and tRNAs when they are encoded in the rRNA operon. Processes pre-crRNA and tracrRNA of type II CRISPR loci if present in the organism. This is Ribonuclease 3 from Rickettsia bellii (strain OSU 85-389).